A 248-amino-acid polypeptide reads, in one-letter code: Ribosomal RNA small subunit methyltransferase J (248 aa).

S-adenosyl-L-methionine is bound by residues 101–102, 117–118, 153–154, and D171; these read RD, ER, and SS.

Belongs to the methyltransferase superfamily. RsmJ family.

It localises to the cytoplasm. The enzyme catalyses guanosine(1516) in 16S rRNA + S-adenosyl-L-methionine = N(2)-methylguanosine(1516) in 16S rRNA + S-adenosyl-L-homocysteine + H(+). Functionally, specifically methylates the guanosine in position 1516 of 16S rRNA. This chain is Ribosomal RNA small subunit methyltransferase J, found in Proteus mirabilis (strain HI4320).